Reading from the N-terminus, the 742-residue chain is Photosystem I P700 chlorophyll a apoprotein A2 (742 aa).

A run of 8 helical transmembrane segments spans residues 46–69 (LFSTHFGHLAIIGLWVAGNLFHIA), 135–158 (LFQGAIFINILVCWLLFAGWLHLQ), 175–199 (LNHHLAVLFGFSSIAWTGHLIHVAI), 273–291 (IAHHHLAIGVVFIIAGHMY), 336–359 (LHFQLGLALASLGVACSLVAQHMG), 375–401 (SALYTHHQYIAMFLMVGAFSHGAIFFV), 423–445 (ALISHLSWVTMLLGFHTLGIYVH), and 525–543 (FLVHHAIALGLHTTALILI). [4Fe-4S] cluster is bound by residues C567 and C576. The next 2 helical transmembrane spans lie at 583-604 (ATYLAMFWALNTIAWITFYWHW) and 651-673 (LSPWAWMFLFGHLIWATGFMFLI). Residues H662, M670, and Y678 each contribute to the divinyl chlorophyll a site. W679 contributes to the phylloquinone binding site. Residues 715–735 (LVGLTHFTVGNFVTFGAFVIA) form a helical membrane-spanning segment.

This sequence belongs to the PsaA/PsaB family. As to quaternary structure, the PsaA/B heterodimer binds the P700 divinyl chlorophyll special pair and subsequent electron acceptors. PSI consists of a core antenna complex that captures photons, and an electron transfer chain that converts photonic excitation into a charge separation. The cyanobacterial PSI reaction center is composed of one copy each of PsaA,B,C,D,E,F,I,J,K,L,M and X, and forms trimeric complexes. PSI electron transfer chain: 5 divinyl chlorophyll a, 1 divinyl chlorophyll a', 2 phylloquinones and 3 4Fe-4S clusters. PSI core antenna: 90 divinyl chlorophyll a, 22 carotenoids, 3 phospholipids and 1 galactolipid. P700 is a divinyl chlorophyll a/divinyl chlorophyll a' dimer, A0 is one or more divinyl chlorophyll a, A1 is one or both phylloquinones and FX is a shared 4Fe-4S iron-sulfur center. serves as cofactor.

It is found in the cellular thylakoid membrane. It carries out the reaction reduced [plastocyanin] + hnu + oxidized [2Fe-2S]-[ferredoxin] = oxidized [plastocyanin] + reduced [2Fe-2S]-[ferredoxin]. Functionally, psaA and PsaB bind P700, the primary electron donor of photosystem I (PSI), as well as the electron acceptors A0, A1 and FX. PSI is a plastocyanin/cytochrome c6-ferredoxin oxidoreductase, converting photonic excitation into a charge separation, which transfers an electron from the donor P700 chlorophyll pair to the spectroscopically characterized acceptors A0, A1, FX, FA and FB in turn. Oxidized P700 is reduced on the lumenal side of the thylakoid membrane by plastocyanin or cytochrome c6. This Prochlorococcus marinus (strain NATL2A) protein is Photosystem I P700 chlorophyll a apoprotein A2.